The primary structure comprises 175 residues: tRNA (cytidine(56)-2'-O)-methyltransferase (175 aa).

Residue Leu82 coordinates S-adenosyl-L-methionine.

It belongs to the aTrm56 family. In terms of assembly, homodimer.

It is found in the cytoplasm. The enzyme catalyses cytidine(56) in tRNA + S-adenosyl-L-methionine = 2'-O-methylcytidine(56) in tRNA + S-adenosyl-L-homocysteine + H(+). Its function is as follows. Specifically catalyzes the AdoMet-dependent 2'-O-ribose methylation of cytidine at position 56 in tRNAs. This is tRNA (cytidine(56)-2'-O)-methyltransferase from Cenarchaeum symbiosum (strain A).